The sequence spans 1604 residues: Putative surface cell antigen sca2 (1604 aa).

A signal peptide spans 1 to 33; that stretch reads MSLQNSHSKKYVLTFFMSTCLLTSSFLSTSARA. Disordered stretches follow at residues 324-354, 554-603, and 1183-1240; these read TTKP…RTKP, NVNN…SNPN, and QQEN…KSLL. A compositionally biased stretch (low complexity) spans 554-564; that stretch reads NVNNNSNKGQN. Residues 568-587 show a composition bias toward pro residues; sequence ILPPTPPLNGSMPPSPPPPL. Composition is skewed to basic and acidic residues over residues 1193–1213 and 1227–1240; these read SSTK…KSDS and SKND…KSLL. The Autotransporter domain maps to 1325–1604; it reads EASINRGVWI…QGLIKLKVNL (280 aa).

The protein localises to the cell outer membrane. The chain is Putative surface cell antigen sca2 (sca2) from Rickettsia felis (strain ATCC VR-1525 / URRWXCal2) (Rickettsia azadi).